The following is a 541-amino-acid chain: Zingiberene synthase (541 aa).

Residues Asp-295, Asp-299, Asn-439, Ser-443, and Glu-447 each contribute to the Mg(2+) site. A DDXXD motif motif is present at residues 295-299; sequence DDIID.

This sequence belongs to the terpene synthase family. The cofactor is Mg(2+). Requires Mn(2+) as cofactor.

The protein resides in the cytoplasm. It catalyses the reaction (2E,6E)-farnesyl diphosphate = alpha-zingiberene + diphosphate. Its pathway is secondary metabolite biosynthesis; terpenoid biosynthesis. Sesquiterpene synthase converting farnesyl diphosphate into two major products, zingiberene &gt; beta-sesquiphellandrene, and five minor products, 7-epi-sesquithujene, sesquisabinene A, (E)-alpha-bergamotene, (E)-beta-farnesene and beta-bisabolene. Can also accept geranyl diphosphate as substrate, producing nine monoterpenes, with myrcene, limonene and alpha-terpinolene as the major products. The protein is Zingiberene synthase (TPS1) of Sorghum bicolor (Sorghum).